Here is a 355-residue protein sequence, read N- to C-terminus: NADH-quinone oxidoreductase subunit H (355 aa).

8 helical membrane passes run 25 to 45 (VVRI…LILW), 91 to 111 (WLYL…WAVI), 126 to 146 (LLYA…AGWA), 170 to 190 (MGFA…SEIV), 205 to 225 (FLSW…ISGI), 253 to 273 (MAFA…SALA), 290 to 310 (FIPG…VFIW), and 330 to 350 (VFLP…MSPL).

This sequence belongs to the complex I subunit 1 family. In terms of assembly, NDH-1 is composed of 14 different subunits. Subunits NuoA, H, J, K, L, M, N constitute the membrane sector of the complex.

Its subcellular location is the cell inner membrane. The enzyme catalyses a quinone + NADH + 5 H(+)(in) = a quinol + NAD(+) + 4 H(+)(out). Functionally, NDH-1 shuttles electrons from NADH, via FMN and iron-sulfur (Fe-S) centers, to quinones in the respiratory chain. The immediate electron acceptor for the enzyme in this species is believed to be ubiquinone. Couples the redox reaction to proton translocation (for every two electrons transferred, four hydrogen ions are translocated across the cytoplasmic membrane), and thus conserves the redox energy in a proton gradient. This subunit may bind ubiquinone. The protein is NADH-quinone oxidoreductase subunit H of Burkholderia cenocepacia (strain HI2424).